A 348-amino-acid chain; its full sequence is Protein RecA (348 aa).

66–73 is an ATP binding site; it reads GPESSGKT.

It belongs to the RecA family.

The protein localises to the cytoplasm. Its function is as follows. Can catalyze the hydrolysis of ATP in the presence of single-stranded DNA, the ATP-dependent uptake of single-stranded DNA by duplex DNA, and the ATP-dependent hybridization of homologous single-stranded DNAs. It interacts with LexA causing its activation and leading to its autocatalytic cleavage. This is Protein RecA from Legionella pneumophila (strain Paris).